We begin with the raw amino-acid sequence, 177 residues long: Large ribosomal subunit protein uL6 (177 aa).

The protein belongs to the universal ribosomal protein uL6 family. Part of the 50S ribosomal subunit.

In terms of biological role, this protein binds to the 23S rRNA, and is important in its secondary structure. It is located near the subunit interface in the base of the L7/L12 stalk, and near the tRNA binding site of the peptidyltransferase center. This Cupriavidus taiwanensis (strain DSM 17343 / BCRC 17206 / CCUG 44338 / CIP 107171 / LMG 19424 / R1) (Ralstonia taiwanensis (strain LMG 19424)) protein is Large ribosomal subunit protein uL6.